Reading from the N-terminus, the 146-residue chain is Cytochrome c-type biogenesis protein CcmE (146 aa).

Residues 1–8 lie on the Cytoplasmic side of the membrane; sequence MNPRRKKR. The helical; Signal-anchor for type II membrane protein transmembrane segment at 9–29 threads the bilayer; the sequence is LGLILALVLGASATVGLMLYA. Over 30-146 the chain is Periplasmic; it reads LNQNMDLFYT…EVAEAMKKTH (117 aa). His-129 and Tyr-133 together coordinate heme.

This sequence belongs to the CcmE/CycJ family.

It localises to the cell inner membrane. Heme chaperone required for the biogenesis of c-type cytochromes. Transiently binds heme delivered by CcmC and transfers the heme to apo-cytochromes in a process facilitated by CcmF and CcmH. The sequence is that of Cytochrome c-type biogenesis protein CcmE from Aliivibrio salmonicida (strain LFI1238) (Vibrio salmonicida (strain LFI1238)).